Reading from the N-terminus, the 99-residue chain is Nucleoid-associated protein EbfC (99 aa).

This sequence belongs to the YbaB/EbfC family. In terms of assembly, homodimer.

The protein localises to the cytoplasm. It localises to the nucleoid. Binds to DNA and alters its conformation. May be involved in regulation of gene expression, nucleoid organization and DNA protection. This chain is Nucleoid-associated protein EbfC, found in Borrelia duttonii (strain Ly).